A 480-amino-acid polypeptide reads, in one-letter code: Protein nucleotidyltransferase YdiU (480 aa).

Residues glycine 86, glycine 88, arginine 89, lysine 109, aspartate 121, glycine 122, arginine 172, and arginine 179 each contribute to the ATP site. The Proton acceptor role is filled by aspartate 248. The Mg(2+) site is built by asparagine 249 and aspartate 258. Aspartate 258 provides a ligand contact to ATP.

Belongs to the SELO family. It depends on Mg(2+) as a cofactor. Mn(2+) is required as a cofactor.

It catalyses the reaction L-seryl-[protein] + ATP = 3-O-(5'-adenylyl)-L-seryl-[protein] + diphosphate. It carries out the reaction L-threonyl-[protein] + ATP = 3-O-(5'-adenylyl)-L-threonyl-[protein] + diphosphate. The catalysed reaction is L-tyrosyl-[protein] + ATP = O-(5'-adenylyl)-L-tyrosyl-[protein] + diphosphate. The enzyme catalyses L-histidyl-[protein] + UTP = N(tele)-(5'-uridylyl)-L-histidyl-[protein] + diphosphate. It catalyses the reaction L-seryl-[protein] + UTP = O-(5'-uridylyl)-L-seryl-[protein] + diphosphate. It carries out the reaction L-tyrosyl-[protein] + UTP = O-(5'-uridylyl)-L-tyrosyl-[protein] + diphosphate. In terms of biological role, nucleotidyltransferase involved in the post-translational modification of proteins. It can catalyze the addition of adenosine monophosphate (AMP) or uridine monophosphate (UMP) to a protein, resulting in modifications known as AMPylation and UMPylation. The protein is Protein nucleotidyltransferase YdiU of Salmonella schwarzengrund (strain CVM19633).